A 253-amino-acid polypeptide reads, in one-letter code: Indole-3-glycerol phosphate synthase (253 aa).

The protein belongs to the TrpC family.

The enzyme catalyses 1-(2-carboxyphenylamino)-1-deoxy-D-ribulose 5-phosphate + H(+) = (1S,2R)-1-C-(indol-3-yl)glycerol 3-phosphate + CO2 + H2O. The protein operates within amino-acid biosynthesis; L-tryptophan biosynthesis; L-tryptophan from chorismate: step 4/5. In Bacillus anthracis (strain A0248), this protein is Indole-3-glycerol phosphate synthase.